The sequence spans 393 residues: NAD(P)H-quinone oxidoreductase subunit H, chloroplastic (393 aa).

Belongs to the complex I 49 kDa subunit family. In terms of assembly, NDH is composed of at least 16 different subunits, 5 of which are encoded in the nucleus.

It is found in the plastid. The protein localises to the chloroplast thylakoid membrane. It catalyses the reaction a plastoquinone + NADH + (n+1) H(+)(in) = a plastoquinol + NAD(+) + n H(+)(out). The catalysed reaction is a plastoquinone + NADPH + (n+1) H(+)(in) = a plastoquinol + NADP(+) + n H(+)(out). In terms of biological role, NDH shuttles electrons from NAD(P)H:plastoquinone, via FMN and iron-sulfur (Fe-S) centers, to quinones in the photosynthetic chain and possibly in a chloroplast respiratory chain. The immediate electron acceptor for the enzyme in this species is believed to be plastoquinone. Couples the redox reaction to proton translocation, and thus conserves the redox energy in a proton gradient. This is NAD(P)H-quinone oxidoreductase subunit H, chloroplastic from Jasminum nudiflorum (Winter jasmine).